The sequence spans 199 residues: Ubiquitin-conjugating enzyme E2-22 kDa (199 aa).

Positions 4–154 (MAVSRIKREF…AKHWTNAYAG (151 aa)) constitute a UBC core domain. Cys92 functions as the Glycyl thioester intermediate in the catalytic mechanism. The UBA domain maps to 161-199 (DCDSKIQRLRDMGIDEHEARAVLSKENWNLEKATEGLFS).

It belongs to the ubiquitin-conjugating enzyme family. As to quaternary structure, interacts with Rpn10. In terms of tissue distribution, during gastrulation, expression is highest in the invaginating posterior midgut primordium (PMG), high expression is also observed in the cephalic furrow and ventral ectodermal neurogenic region. In stage 10-11 embryos, expression is high in the pole cells present in the pocket formed by the PMG. During germ band retraction, expression appears to reinitiate in many tissues, especially the gut and nervous system. After dorsal closure, expression is detectable at low levels throughout the embryo.

It carries out the reaction S-ubiquitinyl-[E1 ubiquitin-activating enzyme]-L-cysteine + [E2 ubiquitin-conjugating enzyme]-L-cysteine = [E1 ubiquitin-activating enzyme]-L-cysteine + S-ubiquitinyl-[E2 ubiquitin-conjugating enzyme]-L-cysteine.. The protein operates within protein modification; protein ubiquitination. In terms of biological role, catalyzes the covalent attachment of ubiquitin to other proteins. This is Ubiquitin-conjugating enzyme E2-22 kDa from Drosophila melanogaster (Fruit fly).